Here is a 323-residue protein sequence, read N- to C-terminus: Elongation factor P--(R)-beta-lysine ligase (323 aa).

A substrate-binding site is contributed by 76–78; sequence SPE. ATP contacts are provided by residues 100 to 102 and Asn109; that span reads RNE. Tyr118 serves as a coordination point for substrate. 242 to 243 serves as a coordination point for ATP; that stretch reads EL. Residue Glu249 participates in substrate binding. ATP is bound at residue Gly298.

Belongs to the class-II aminoacyl-tRNA synthetase family. EpmA subfamily. As to quaternary structure, homodimer.

It catalyses the reaction D-beta-lysine + L-lysyl-[protein] + ATP = N(6)-((3R)-3,6-diaminohexanoyl)-L-lysyl-[protein] + AMP + diphosphate + H(+). Its function is as follows. With EpmB is involved in the beta-lysylation step of the post-translational modification of translation elongation factor P (EF-P). Catalyzes the ATP-dependent activation of (R)-beta-lysine produced by EpmB, forming a lysyl-adenylate, from which the beta-lysyl moiety is then transferred to the epsilon-amino group of a conserved specific lysine residue in EF-P. This is Elongation factor P--(R)-beta-lysine ligase from Histophilus somni (strain 129Pt) (Haemophilus somnus).